A 105-amino-acid polypeptide reads, in one-letter code: U2-lycotoxin-Ls1d (105 aa).

A signal peptide spans M1–S17. Residues F18–R41 constitute a propeptide that is removed on maturation. Disulfide bonds link C51/C67, C58/C97, C60/C83, and C69/C81.

It belongs to the neurotoxin 04 (omega-agtx) family. 01 (type I omega-agtx) subfamily. In terms of tissue distribution, expressed by the venom gland.

It localises to the secreted. Its function is as follows. Insecticidal to house crickets. It induces an excitatory slow-onset impact that leads to irreversible spastic paralysis. It also modifies human voltage-gated potassium channel Kv1.5/KCNA5. Most likely, it binds to the voltage-sensing domain of the channel, suggesting it does not block the pore but prevents its opening at physiological membrane potentials. The recombinant peptide binds to the channel in an irreversible manner and slows down the hKv1.5 current activation kinetics. It is not toxic to mice, when intracranially injected (at 0.5 ug/g mouse). The chain is U2-lycotoxin-Ls1d from Lycosa singoriensis (Wolf spider).